Here is a 193-residue protein sequence, read N- to C-terminus: dCTP deaminase, dUMP-forming (193 aa).

Residues 101 to 106, D119, 127 to 129, Q148, Y162, and Q174 each bind dCTP; these read KSSLGR and TLE. The Proton donor/acceptor role is filled by E129. Residues 161-184 are disordered; sequence PYGSETTGSHYQGQRGPTPSRSYQ.

This sequence belongs to the dCTP deaminase family. In terms of assembly, homotrimer.

The catalysed reaction is dCTP + 2 H2O = dUMP + NH4(+) + diphosphate. It functions in the pathway pyrimidine metabolism; dUMP biosynthesis; dUMP from dCTP: step 1/1. Bifunctional enzyme that catalyzes both the deamination of dCTP to dUTP and the hydrolysis of dUTP to dUMP without releasing the toxic dUTP intermediate. The chain is dCTP deaminase, dUMP-forming from Bifidobacterium animalis subsp. lactis (strain AD011).